A 209-amino-acid chain; its full sequence is Ribosomal RNA large subunit methyltransferase E (209 aa).

Positions 63, 65, 83, 99, and 124 each coordinate S-adenosyl-L-methionine. Lysine 164 (proton acceptor) is an active-site residue.

Belongs to the class I-like SAM-binding methyltransferase superfamily. RNA methyltransferase RlmE family.

It is found in the cytoplasm. The enzyme catalyses uridine(2552) in 23S rRNA + S-adenosyl-L-methionine = 2'-O-methyluridine(2552) in 23S rRNA + S-adenosyl-L-homocysteine + H(+). Its function is as follows. Specifically methylates the uridine in position 2552 of 23S rRNA at the 2'-O position of the ribose in the fully assembled 50S ribosomal subunit. This is Ribosomal RNA large subunit methyltransferase E from Shewanella loihica (strain ATCC BAA-1088 / PV-4).